A 135-amino-acid polypeptide reads, in one-letter code: Transcription antitermination protein NusB (135 aa).

It belongs to the NusB family.

Involved in transcription antitermination. Required for transcription of ribosomal RNA (rRNA) genes. Binds specifically to the boxA antiterminator sequence of the ribosomal RNA (rrn) operons. This chain is Transcription antitermination protein NusB, found in Clostridium perfringens (strain ATCC 13124 / DSM 756 / JCM 1290 / NCIMB 6125 / NCTC 8237 / Type A).